The sequence spans 283 residues: Homeobox-leucine zipper protein HAT2 (283 aa).

The segment at Val-64–Leu-134 is disordered. The span at Ser-73–Ser-84 shows a compositional bias: low complexity. The segment at residues Thr-127–Gln-186 is a DNA-binding region (homeobox). The tract at residues Leu-194–Leu-215 is leucine-zipper.

It belongs to the HD-ZIP homeobox family. Class II subfamily. As to quaternary structure, interacts with RBR1.

The protein resides in the nucleus. Functionally, probable transcription factor that plays a role in auxin-mediated morphogenesis. Negatively regulates lateral root elongation. The protein is Homeobox-leucine zipper protein HAT2 (HAT2) of Arabidopsis thaliana (Mouse-ear cress).